A 266-amino-acid polypeptide reads, in one-letter code: Serine/arginine-rich splicing factor 12 (266 aa).

A disordered region spans residues 42-266; sequence ARPRRPRAPR…SRSYHHKNSW (225 aa). The segment covering 43–62 has biased composition (basic residues); that stretch reads RPRRPRAPRPRLRLRGRPGR. The span at 102 to 114 shows a compositional bias: basic and acidic residues; sequence KSKERHLCSPSDH. Over residues 115–127 the composition is skewed to basic residues; sequence RRSRSPSQRRSRS. The segment covering 133 to 144 has biased composition (basic and acidic residues); it reads GRDRRHSDSLKE. Low complexity predominate over residues 151–166; it reads SYSQSKSRSKSLPRQS. The segment covering 183-194 has biased composition (basic residues); it reads GRSRSKSLPKRS. Polar residues-rich tracts occupy residues 202-212 and 235-244; these read SRSPQKQTGSG and AYTSSGSKTQ. Over residues 245-266 the composition is skewed to basic residues; that stretch reads TTKHSHLRSHSRSRSYHHKNSW.

It belongs to the splicing factor SR family.

The protein localises to the nucleus. Splicing factor that seems to antagonize SR proteins in pre-mRNA splicing regulation. This chain is Serine/arginine-rich splicing factor 12 (Srsf12), found in Mus musculus (Mouse).